The chain runs to 181 residues: SecB-like chaperone Rv1957 (181 aa).

Thr2 is subject to N-acetylthreonine.

Belongs to the SecB-like family. In terms of assembly, homotetramer, interacts with antitoxin HigA1.

Chaperone component of an atypical, type II toxin-antitoxin chaperone (TAC) system. Prevents antitoxin HigA1 aggregation in vitro at a 1:3 chaperone:antitoxin ratio, probably also protects antitoxin HigA1 from protease. Required for neutralization of toxin HigB1 upon ectopic expression in Mycobacterium marinum or E.coli. When expressed in E.coli complements a secB deletion, restores export of OmpA and MBP and inhibits aggregation of proOmpC although it is less efficient than endogenous SecB. Complements the general chaperone function of E.coli SecB less well. This chain is SecB-like chaperone Rv1957 (secBL), found in Mycobacterium tuberculosis (strain ATCC 25618 / H37Rv).